Consider the following 128-residue polypeptide: MKFDTMLAIGIGGFIGAILRAYTAGLVNSAVKHDIPFGTLSVNLIGSLLLGMFIGAIQYGGIQNPYIKSMLTTGMMGAFTTFSTFAVESFFLFKNALYIQALSYILLNVIGCIILAGAGFKGIEAILK.

4 consecutive transmembrane segments (helical) span residues 7–27 (LAIG…AGLV), 37–57 (FGTL…IGAI), 73–93 (TGMM…FFLF), and 96–116 (ALYI…IILA). Residues glycine 77 and threonine 80 each contribute to the Na(+) site.

This sequence belongs to the fluoride channel Fluc/FEX (TC 1.A.43) family.

The protein resides in the cell inner membrane. The catalysed reaction is fluoride(in) = fluoride(out). Its activity is regulated as follows. Na(+) is not transported, but it plays an essential structural role and its presence is essential for fluoride channel function. Functionally, fluoride-specific ion channel. Important for reducing fluoride concentration in the cell, thus reducing its toxicity. The protein is Fluoride-specific ion channel FluC of Nautilia profundicola (strain ATCC BAA-1463 / DSM 18972 / AmH).